A 427-amino-acid chain; its full sequence is Isoprenylcysteine alpha-carbonyl methylesterase ICME (427 aa).

The segment at 26–59 is disordered; the sequence is EVLPDEDSDRTTLLNGEPLRRRVSGKSPVDEGPR. The next 2 helical transmembrane spans lie at 102–122 and 157–177; these read LLAL…VAYS and VVVF…GSLL. Substrate contacts are provided by residues 163–165 and 234–236; these read GGA and QSA. Residues S235, D336, and H368 contribute to the active site.

This sequence belongs to the AB hydrolase superfamily. Isoprenylcysteine methylesterase family. Expressed in roots, rosette and cauline leaves, stems, flowers and siliques.

It localises to the endoplasmic reticulum membrane. The protein resides in the golgi apparatus membrane. It catalyses the reaction [protein]-C-terminal S-[(2E,6E)-farnesyl]-L-cysteine methyl ester + H2O = [protein]-C-terminal S-[(2E,6E)-farnesyl]-L-cysteine + methanol + H(+). In terms of biological role, catalyzes the demethylation of isoprenylcysteine methylesters. In vitro, is specific for N-acetyl-S-farnesyl-L-cysteine methyl ester (AFCme) and has low activity toward N-acetyl-S-geranyl-L-cysteine methyl ester (AGCme). Acts as a positive regulator of ABA signaling. May be involved in the demethylation and inactivation of isoprenylated negative regulators of abscisic acid (ABA) signaling. Carboxyl methylation is a reversible and potentially regulated step in the post-translational modification of prenylated proteins. In Arabidopsis thaliana (Mouse-ear cress), this protein is Isoprenylcysteine alpha-carbonyl methylesterase ICME.